A 557-amino-acid chain; its full sequence is Formate--tetrahydrofolate ligase (557 aa).

67–74 (TPAGEGKT) provides a ligand contact to ATP.

Belongs to the formate--tetrahydrofolate ligase family.

It carries out the reaction (6S)-5,6,7,8-tetrahydrofolate + formate + ATP = (6R)-10-formyltetrahydrofolate + ADP + phosphate. Its pathway is one-carbon metabolism; tetrahydrofolate interconversion. This Cereibacter sphaeroides (strain KD131 / KCTC 12085) (Rhodobacter sphaeroides) protein is Formate--tetrahydrofolate ligase.